A 133-amino-acid polypeptide reads, in one-letter code: Ribonuclease P protein component (133 aa).

Belongs to the RnpA family. In terms of assembly, consists of a catalytic RNA component (M1 or rnpB) and a protein subunit.

It catalyses the reaction Endonucleolytic cleavage of RNA, removing 5'-extranucleotides from tRNA precursor.. In terms of biological role, RNaseP catalyzes the removal of the 5'-leader sequence from pre-tRNA to produce the mature 5'-terminus. It can also cleave other RNA substrates such as 4.5S RNA. The protein component plays an auxiliary but essential role in vivo by binding to the 5'-leader sequence and broadening the substrate specificity of the ribozyme. The chain is Ribonuclease P protein component from Pseudomonas fluorescens (strain Pf0-1).